The following is a 122-amino-acid chain: Large ribosomal subunit protein uL14c (122 aa).

This sequence belongs to the universal ribosomal protein uL14 family. As to quaternary structure, part of the 50S ribosomal subunit.

It localises to the plastid. Its subcellular location is the chloroplast. In terms of biological role, binds to 23S rRNA. In Panax ginseng (Korean ginseng), this protein is Large ribosomal subunit protein uL14c.